Reading from the N-terminus, the 628-residue chain is WW domain-containing adapter protein with coiled-coil (628 aa).

Disordered regions lie at residues 1–130 (MVMY…DDWS), 152–338 (EKPK…PQSP), and 417–532 (NQSP…SARS). The span at 37–49 (SSDHRHDKMRDST) shows a compositional bias: basic and acidic residues. Residues 74–84 (GKAKSMHLHRV) are compositionally biased toward basic residues. Over residues 101–121 (NHSAIHSSNSHSSTPSKTSDS) the composition is skewed to low complexity. A WW domain is found at 123 to 156 (YDPADDWSEHISSSGKKYYYNCRTEVSQWEKPKE). 2 stretches are compositionally biased toward basic and acidic residues: residues 152-168 (EKPK…KETS) and 176-185 (PKDRDYRREA). Residues 199–213 (DTSTMLPQNILSQTS) show a composition bias toward polar residues. Over residues 214 to 227 (RHNDRDYRLPRTDS) the composition is skewed to basic and acidic residues. 2 stretches are compositionally biased toward low complexity: residues 230 to 260 (SAAP…TVQP) and 299 to 331 (SDKS…TVPV). Residues 420–446 (PMSLTSDASSPRSYVSPRISTPQTNTV) show a composition bias toward polar residues. A compositionally biased stretch (low complexity) spans 467-486 (GSKQGSSAQTASQQSSAADK). The span at 511–532 (PNHNSSTCASSTSAPQNSSARS) shows a compositional bias: polar residues. Positions 599–625 (QATLREQRILFLRQQIKELEKLKNQNS) form a coiled coil.

It is found in the nucleus. Functionally, acts as a linker between gene transcription and histone H2B monoubiquitination at 'Lys-120' (H2BK120ub1). Positive regulator of amino acid starvation-induced autophagy. Positively regulates MTOR activity. May negatively regulate the ubiquitin proteasome pathway. In Xenopus tropicalis (Western clawed frog), this protein is WW domain-containing adapter protein with coiled-coil (wac).